The primary structure comprises 1149 residues: DNA-directed RNA polymerase III subunit RPC2 (1149 aa).

Residues cysteine 1095, cysteine 1098, cysteine 1107, and cysteine 1110 each coordinate Zn(2+). The C4-type zinc finger occupies 1095-1110 (CDKCGLMGYSGWCTTC).

This sequence belongs to the RNA polymerase beta chain family. As to quaternary structure, component of the RNA polymerase III (Pol III) complex consisting of 17 subunits.

Its subcellular location is the nucleus. It carries out the reaction RNA(n) + a ribonucleoside 5'-triphosphate = RNA(n+1) + diphosphate. Its function is as follows. DNA-dependent RNA polymerase catalyzes the transcription of DNA into RNA using the four ribonucleoside triphosphates as substrates. Second largest core component of RNA polymerase III which synthesizes small RNAs, such as 5S rRNA and tRNAs. Proposed to contribute to the polymerase catalytic activity and forms the polymerase active center together with the largest subunit. Pol III is composed of mobile elements and RPC2 is part of the core element with the central large cleft and probably a clamp element that moves to open and close the cleft. This Saccharomyces cerevisiae (strain ATCC 204508 / S288c) (Baker's yeast) protein is DNA-directed RNA polymerase III subunit RPC2 (RET1).